A 476-amino-acid polypeptide reads, in one-letter code: Serine/threonine-protein kinase Chk1 (476 aa).

The interaction with CLSPN stretch occupies residues 1 to 265 (MAVPFVEDWD…IPDIKKDRWY (265 aa)). Residues 9–265 (WDLVQTLGEG…IPDIKKDRWY (257 aa)) form the Protein kinase domain. ATP is bound by residues 15–23 (LGEGAYGEV) and Lys38. Asp130 serves as the catalytic Proton acceptor. Residue Lys132 forms a Glycyl lysine isopeptide (Lys-Gly) (interchain with G-Cter in ubiquitin) linkage. The disordered stretch occupies residues 267-329 (KPLNRGAKRP…EPRTGLSLWD (63 aa)). Phosphoserine; by PKB/AKT1 is present on Ser280. The span at 280–291 (SGGMSESSSGFS) shows a compositional bias: low complexity. Residues Ser286, Ser296, and Ser301 each carry the phosphoserine modification. The segment covering 298–320 (LDFSPINSGSSEENVKFSSSQPE) has biased composition (polar residues). Phosphoserine; by ATM and ATR occurs at positions 317 and 345. Residues 391–476 (QCLKETFEKL…SSQKVWFPVT (86 aa)) are autoinhibitory region. Lys436 is covalently cross-linked (Glycyl lysine isopeptide (Lys-Gly) (interchain with G-Cter in ubiquitin)). A phosphoserine mark is found at Ser463, Ser467, and Ser468.

It belongs to the protein kinase superfamily. CAMK Ser/Thr protein kinase family. NIM1 subfamily. Interacts (phosphorylated by ATR) with RAD51. Interacts with and phosphorylates CLSPN, an adapter protein that regulates the ATR-dependent phosphorylation of CHEK1. Interacts with BRCA1. Interacts with and phosphorylates CDC25A, CDC25B and CDC25C. Interacts with FBXO6, which regulates CHEK1. Interacts with PPM1D, which regulates CHEK1 through dephosphorylation. Interacts with TIMELESS; DNA damage-dependent. Interacts with FEM1B; activates CHEK1 in response to stress. Interacts with TLK1. Interacts with XPO1 and YWHAZ. Interacts with CDK5RAP3; antagonizes CHEK1. Post-translationally, phosphorylated by ATR in a RAD17-dependent manner in response to ultraviolet irradiation and inhibition of DNA replication. Phosphorylated by ATM in response to ionizing irradiation. ATM and ATR can both phosphorylate Ser-317 and Ser-345 and this results in enhanced kinase activity. Phosphorylation at Ser-345 induces a change in the conformation of the protein, activates the kinase activity and is a prerequisite for interaction with FBXO6 and subsequent ubiquitination at Lys-436. Phosphorylation at Ser-345 also increases binding to 14-3-3 proteins and promotes nuclear retention. Conversely, dephosphorylation at Ser-345 by PPM1D may contribute to exit from checkpoint mediated cell cycle arrest. Phosphorylation at Ser-280 by AKT1/PKB, may promote mono and/or diubiquitination. Also phosphorylated at undefined residues during mitotic arrest, resulting in decreased activity. Ubiquitinated. Mono or diubiquitination promotes nuclear exclusion. The activated form (phosphorylated on Ser-345) is polyubiquitinated at Lys-436 by some SCF-type E3 ubiquitin ligase complex containing FBXO6 promoting its degradation. Ubiquitination and degradation are required to terminate the checkpoint and ensure that activated CHEK1 does not accumulate as cells progress through S phase, when replication forks encounter transient impediments during normal DNA replication. 'Lys-63'-mediated ubiquitination by TRAF4 at Lys-132 activates cell cycle arrest and activation of DNA repair. In terms of processing, proteolytically cleaved at the C-terminus by SPRTN during normal DNA replication, thereby promoting CHEK1 removal from chromatin and activating the protein kinase activity. Expressed in brain, heart, liver, lung, skeletal muscle, spleen and testis. In terms of tissue distribution, expressed only in liver.

It localises to the nucleus. It is found in the chromosome. Its subcellular location is the cytoplasm. The protein resides in the cytoskeleton. The protein localises to the microtubule organizing center. It localises to the centrosome. The enzyme catalyses L-seryl-[protein] + ATP = O-phospho-L-seryl-[protein] + ADP + H(+). It catalyses the reaction L-threonyl-[protein] + ATP = O-phospho-L-threonyl-[protein] + ADP + H(+). Its activity is regulated as follows. Activated through phosphorylation predominantly by ATR but also by ATM in response to DNA damage or inhibition of DNA replication. Activation is modulated by several mediators including CLSPN, BRCA1 and FEM1B. Proteolytic cleavage at the C-terminus by SPRTN during normal DNA replication activates the protein kinase activity. Serine/threonine-protein kinase which is required for checkpoint-mediated cell cycle arrest and activation of DNA repair in response to the presence of DNA damage or unreplicated DNA. May also negatively regulate cell cycle progression during unperturbed cell cycles. This regulation is achieved by a number of mechanisms that together help to preserve the integrity of the genome. Recognizes the substrate consensus sequence [R-X-X-S/T]. Binds to and phosphorylates CDC25A, CDC25B and CDC25C. Phosphorylation of CDC25A at 'Ser-178' and 'Thr-507' and phosphorylation of CDC25C at 'Ser-216' creates binding sites for 14-3-3 proteins which inhibit CDC25A and CDC25C. Phosphorylation of CDC25A at 'Ser-76', 'Ser-124', 'Ser-178', 'Ser-279' and 'Ser-293' promotes proteolysis of CDC25A. Phosphorylation of CDC25A at 'Ser-76' primes the protein for subsequent phosphorylation at 'Ser-79', 'Ser-82' and 'Ser-88' by NEK11, which is required for polyubiquitination and degradation of CDCD25A. Inhibition of CDC25 leads to increased inhibitory tyrosine phosphorylation of CDK-cyclin complexes and blocks cell cycle progression. Also phosphorylates NEK6. Binds to and phosphorylates RAD51 at 'Thr-309', which promotes the release of RAD51 from BRCA2 and enhances the association of RAD51 with chromatin, thereby promoting DNA repair by homologous recombination. Phosphorylates multiple sites within the C-terminus of TP53, which promotes activation of TP53 by acetylation and promotes cell cycle arrest and suppression of cellular proliferation. Also promotes repair of DNA cross-links through phosphorylation of FANCE. Binds to and phosphorylates TLK1 at 'Ser-743', which prevents the TLK1-dependent phosphorylation of the chromatin assembly factor ASF1A. This may enhance chromatin assembly both in the presence or absence of DNA damage. May also play a role in replication fork maintenance through regulation of PCNA. May regulate the transcription of genes that regulate cell-cycle progression through the phosphorylation of histones. Phosphorylates histone H3.1 (to form H3T11ph), which leads to epigenetic inhibition of a subset of genes. May also phosphorylate RB1 to promote its interaction with the E2F family of transcription factors and subsequent cell cycle arrest. Phosphorylates SPRTN, promoting SPRTN recruitment to chromatin. Reduces replication stress and activates the G2/M checkpoint, by phosphorylating and inactivating PABIR1/FAM122A and promoting the serine/threonine-protein phosphatase 2A-mediated dephosphorylation and stabilization of WEE1 levels and activity. This chain is Serine/threonine-protein kinase Chk1 (Chek1), found in Rattus norvegicus (Rat).